A 270-amino-acid polypeptide reads, in one-letter code: Glucosamine-6-phosphate deaminase (270 aa).

Aspartate 72 acts as the Proton acceptor; for enolization step in catalysis. Aspartate 141 functions as the For ring-opening step in the catalytic mechanism. The active-site Proton acceptor; for ring-opening step is histidine 143. Glutamate 148 serves as the catalytic For ring-opening step.

It belongs to the glucosamine/galactosamine-6-phosphate isomerase family. NagB subfamily.

It carries out the reaction alpha-D-glucosamine 6-phosphate + H2O = beta-D-fructose 6-phosphate + NH4(+). It functions in the pathway amino-sugar metabolism; N-acetylneuraminate degradation; D-fructose 6-phosphate from N-acetylneuraminate: step 5/5. Allosterically activated by N-acetylglucosamine 6-phosphate (GlcNAc6P). Its function is as follows. Catalyzes the reversible isomerization-deamination of glucosamine 6-phosphate (GlcN6P) to form fructose 6-phosphate (Fru6P) and ammonium ion. In Bacteroides fragilis (strain ATCC 25285 / DSM 2151 / CCUG 4856 / JCM 11019 / LMG 10263 / NCTC 9343 / Onslow / VPI 2553 / EN-2), this protein is Glucosamine-6-phosphate deaminase.